A 1168-amino-acid chain; its full sequence is Transcription-repair-coupling factor (1168 aa).

A Helicase ATP-binding domain is found at 633 to 794 (DMQKSRPMDR…MLGVRDLSVI (162 aa)). Residue 646–653 (GDVGYGKT) participates in ATP binding. The DEEQ box signature appears at 747–750 (DEEQ). One can recognise a Helicase C-terminal domain in the interval 808–969 (VLEQNMSFIK…GFKIAMRDLN (162 aa)).

This sequence in the N-terminal section; belongs to the UvrB family. In the C-terminal section; belongs to the helicase family. RecG subfamily.

The protein localises to the cytoplasm. In terms of biological role, couples transcription and DNA repair by recognizing RNA polymerase (RNAP) stalled at DNA lesions. Mediates ATP-dependent release of RNAP and its truncated transcript from the DNA, and recruitment of nucleotide excision repair machinery to the damaged site. In Staphylococcus aureus (strain bovine RF122 / ET3-1), this protein is Transcription-repair-coupling factor.